The following is an 82-amino-acid chain: Musculoskeletal embryonic nuclear protein 1 (82 aa).

The disordered stretch occupies residues 1-34 (MSQAGAQEAPIKKKRPPVKEEDLKGARGNLTKNQ). Ser2 carries the post-translational modification Phosphoserine. The Nuclear localization signal signature appears at 10 to 18 (PIKKKRPPV).

This sequence belongs to the MUSTN1 family.

The protein localises to the nucleus. Its subcellular location is the cytoplasm. The protein resides in the secreted. It is found in the extracellular space. In terms of biological role, required for chondrocyte development and proliferation. Plays a role in myoblast differentiation and fusion. Modulates skeletal muscle extracellular matrix composition. Plays a role in skeletal muscle function. Plays a role in glucose homeostasis. The sequence is that of Musculoskeletal embryonic nuclear protein 1 (MUSTN1) from Bos taurus (Bovine).